The sequence spans 65 residues: Large ribosomal subunit protein bL35 (65 aa).

Belongs to the bacterial ribosomal protein bL35 family.

The chain is Large ribosomal subunit protein bL35 from Xanthomonas campestris pv. campestris (strain ATCC 33913 / DSM 3586 / NCPPB 528 / LMG 568 / P 25).